A 424-amino-acid chain; its full sequence is Tyrosine--tRNA ligase 1 (424 aa).

Position 37 (Tyr37) interacts with L-tyrosine. Positions 42–51 (PTADSLHLGH) match the 'HIGH' region motif. The L-tyrosine site is built by Tyr175 and Gln179. The 'KMSKS' region motif lies at 235 to 239 (KFGKT). Lys238 contacts ATP. An S4 RNA-binding domain is found at 357-414 (ADLQQALVNAGLVPSRGQARTMISSNAVAINGEKQSEPEYLFTDSNRLFDRYTLLRRG).

Belongs to the class-I aminoacyl-tRNA synthetase family. TyrS type 1 subfamily. As to quaternary structure, homodimer.

The protein resides in the cytoplasm. The catalysed reaction is tRNA(Tyr) + L-tyrosine + ATP = L-tyrosyl-tRNA(Tyr) + AMP + diphosphate + H(+). Its function is as follows. Catalyzes the attachment of tyrosine to tRNA(Tyr) in a two-step reaction: tyrosine is first activated by ATP to form Tyr-AMP and then transferred to the acceptor end of tRNA(Tyr). The polypeptide is Tyrosine--tRNA ligase 1 (Photorhabdus laumondii subsp. laumondii (strain DSM 15139 / CIP 105565 / TT01) (Photorhabdus luminescens subsp. laumondii)).